A 297-amino-acid polypeptide reads, in one-letter code: Phosphoribosylaminoimidazole-succinocarboxamide synthase (297 aa).

The protein belongs to the SAICAR synthetase family.

The enzyme catalyses 5-amino-1-(5-phospho-D-ribosyl)imidazole-4-carboxylate + L-aspartate + ATP = (2S)-2-[5-amino-1-(5-phospho-beta-D-ribosyl)imidazole-4-carboxamido]succinate + ADP + phosphate + 2 H(+). It functions in the pathway purine metabolism; IMP biosynthesis via de novo pathway; 5-amino-1-(5-phospho-D-ribosyl)imidazole-4-carboxamide from 5-amino-1-(5-phospho-D-ribosyl)imidazole-4-carboxylate: step 1/2. The chain is Phosphoribosylaminoimidazole-succinocarboxamide synthase from Mycobacterium ulcerans (strain Agy99).